We begin with the raw amino-acid sequence, 240 residues long: uncharacterized protein (240 aa).

Residues 26 to 52 form a disordered region; sequence DYVDDGESLPTRQSVKNQREQKKKQGK. Residues 57–77 form a helical membrane-spanning segment; that stretch reads LFTVLAVIFVFVPVIVLVTLF. The interval 100–185 is disordered; that stretch reads KYEVVPKSED…QPAEPVQNVP (86 aa). The segment covering 103–159 has biased composition (basic and acidic residues); the sequence is VVPKSEDKNDTADTKETALQKESKKEPEDSKPKEQTAADKKQTAVAEKEDSPNKEEA. The span at 160–185 shows a compositional bias: low complexity; it reads TAAAASSSQSTVQQQEQPAEPVQNVP. Residues 189 to 235 enclose the LysM domain; it reads VKHTVQKKETLYRISMKYYKSRTGEEKIRAYNHLNGNDVYTGQVLDI.

Its subcellular location is the membrane. This is an uncharacterized protein from Bacillus subtilis (strain 168).